The chain runs to 728 residues: MSDRIDRDVINALIAGHFADPFSVLGMHKTTAGLEVRALLPDATDVWVIEPKTGRKLAKLECLDSRGFFSGVIPRRKNFFRYQLAVVWHGQQNLIDDPYRFGPLIQEMDAWLLSEGTHLRPYETLGAHADTMDGVTGTRFSVWAPNARRVSVVGQFNYWDGRRHPMRLRKESGIWELFIPGAHNGQLYKYEMIDANGNLRLKSDPYAFEAQMRPETASLICGLPEKVVQTEERKKANQFDAPISIYEVHLGSWRRHTDNNFWLSYRELADQLVPYAKWMGFTHLELLPINEHPFDGSWGYQPTGLYAPTRRFGTRDDFRYFIDAAHAAGLNVILDWVPGHFPTDDFALAEFDGTNLYEHSDPREGYHQDWNTLIYNYGRREVSNFLVGNALYWIERFGIDALRVDAVASMIYRDYSRKEGEWIPNEFGGRENLEAIEFLRNTNRILGEQVSGAVTMAEESTDFPGVSRPQDMGGLGFWYKWNLGWMHDTLDYMKLDPVYRQYHHDKLTFGILYNYTENFVLPLSHDEVVHGKKSILDRMPGDAWQKFANLRAYYGWMWAFPGKKLLFMGNEFAQGREWNHDASLDWHLLEGGDNWHHGVQRLVRDLNLTYRHHKAMHELDFDPYGFEWLVVDDKERSVLIFVRRDKEGNEIIVASNFTPVPRHDYRFGINQPGKWREILNTDSMHYHGSNAGNGGTVHSDEIASHGRQHSLSLTLPPLATIWLVREAE.

Asp405 acts as the Nucleophile in catalysis. The Proton donor role is filled by Glu458.

Belongs to the glycosyl hydrolase 13 family. GlgB subfamily. Monomer.

The catalysed reaction is Transfers a segment of a (1-&gt;4)-alpha-D-glucan chain to a primary hydroxy group in a similar glucan chain.. The protein operates within glycan biosynthesis; glycogen biosynthesis. Catalyzes the formation of the alpha-1,6-glucosidic linkages in glycogen by scission of a 1,4-alpha-linked oligosaccharide from growing alpha-1,4-glucan chains and the subsequent attachment of the oligosaccharide to the alpha-1,6 position. The polypeptide is 1,4-alpha-glucan branching enzyme GlgB (Escherichia coli O139:H28 (strain E24377A / ETEC)).